The following is a 720-amino-acid chain: Nucleolar protein 11 (720 aa).

The tract at residues 365–392 is disordered; that stretch reads KDPETKPSNAGAQKKTRERKTNANAGNG.

Its subcellular location is the nucleus. The protein localises to the nucleolus. Functionally, ribosome biogenesis factor. May be required for both optimal rDNA transcription and pre-rRNA processing. In Xenopus laevis (African clawed frog), this protein is Nucleolar protein 11 (nol11).